The sequence spans 254 residues: Probable pectate lyase E (254 aa).

The N-terminal stretch at methionine 1–alanine 17 is a signal peptide. Residue asparagine 175 is glycosylated (N-linked (GlcNAc...) asparagine). The tract at residues aspartate 228–cysteine 254 is disordered.

This sequence belongs to the polysaccharide lyase 3 family. Ca(2+) serves as cofactor.

It is found in the secreted. The enzyme catalyses Eliminative cleavage of (1-&gt;4)-alpha-D-galacturonan to give oligosaccharides with 4-deoxy-alpha-D-galact-4-enuronosyl groups at their non-reducing ends.. Its function is as follows. Pectinolytic enzyme consist of four classes of enzymes: pectin lyase, polygalacturonase, pectin methylesterase and rhamnogalacturonase. Among pectinolytic enzymes, pectin lyase is the most important in depolymerization of pectin, since it cleaves internal glycosidic bonds of highly methylated pectins. Favors pectate, the anion, over pectin, the methyl ester. This is Probable pectate lyase E (plyE) from Aspergillus fumigatus (strain ATCC MYA-4609 / CBS 101355 / FGSC A1100 / Af293) (Neosartorya fumigata).